The chain runs to 189 residues: Probable pericyclase scpY (189 aa).

The protein belongs to the pericyclase pydY family.

Its pathway is mycotoxin biosynthesis. Its function is as follows. Probable pericyclase; part of the gene scp cluster that mediates the biosynthesis of a hirsutellone-like compound that has still to be identified. The chain is Probable pericyclase scpY from Mollisia scopiformis (Conifer needle endophyte fungus).